Consider the following 505-residue polypeptide: Protein MGF 505-4R (505 aa).

The protein belongs to the asfivirus MGF 505 family.

Functionally, plays a role in virus cell tropism, and may be required for efficient virus replication in macrophages. This is Protein MGF 505-4R from Ornithodoros (relapsing fever ticks).